The chain runs to 241 residues: Small ribosomal subunit protein uS2 (241 aa).

The protein belongs to the universal ribosomal protein uS2 family.

The sequence is that of Small ribosomal subunit protein uS2 from Shigella flexneri serotype 5b (strain 8401).